The chain runs to 392 residues: 5-azacytidine-induced protein 2 (392 aa).

Residues 1–197 (MDALVEDDIC…IELQKAKQTD (197 aa)) form a homodimerization region. Coiled coils occupy residues 40-76 (ALVT…LIAR), 102-135 (DRDN…EVEL), and 166-196 (DLKI…AKQT). Residues 216 to 257 (SDNMQHAYWELKREMSNLHLVTQVQAELLRKLKTSTAIKKAC) form an interaction with TBK1 and IKBKE region. Residues Ser318 and Ser353 each carry the phosphoserine modification. The interval 345–365 (EDNSWVFPSPPKSSETAFGET) is disordered.

As to quaternary structure, homodimer. Interacts with IKBKE, TBK1 and TICAM1. Interacts with TAX1BP1. Interacts with CALCOCO2. Post-translationally, ubiquitinated via 'Lys-48'-linked polyubiquitination by TRIM38, leading to its degradation.

The protein resides in the cytoplasm. Adapter protein which binds TBK1 and IKBKE playing a role in antiviral innate immunity. Activates serine/threonine-protein kinase TBK1 and facilitates its oligomerization. Enhances the phosphorylation of NF-kappa-B p65 subunit RELA by TBK1. Promotes TBK1-induced as well as TNF-alpha or PMA-induced activation of NF-kappa-B. Participates in IFNB promoter activation via TICAM1. This chain is 5-azacytidine-induced protein 2 (AZI2), found in Pongo abelii (Sumatran orangutan).